We begin with the raw amino-acid sequence, 79 residues long: Acyl carrier protein (79 aa).

Residues 1 to 76 (MSLEDDVIAI…DVFTYIKKRQ (76 aa)) enclose the Carrier domain. Ser36 carries the O-(pantetheine 4'-phosphoryl)serine modification.

This sequence belongs to the acyl carrier protein (ACP) family. 4'-phosphopantetheine is transferred from CoA to a specific serine of apo-ACP by AcpS. This modification is essential for activity because fatty acids are bound in thioester linkage to the sulfhydryl of the prosthetic group.

It is found in the cytoplasm. It participates in lipid metabolism; fatty acid biosynthesis. Functionally, carrier of the growing fatty acid chain in fatty acid biosynthesis. This chain is Acyl carrier protein, found in Chlamydia pneumoniae (Chlamydophila pneumoniae).